We begin with the raw amino-acid sequence, 216 residues long: Transmembrane emp24 domain-containing protein eca (216 aa).

An N-terminal signal peptide occupies residues 1–20 (MRNQFICVALLLCALNSACG). At 21 to 183 (LYFHISETER…RHTSESTNSR (163 aa)) the chain is on the lumenal side. One can recognise a GOLD domain in the interval 30-126 (RKCFIEEVPD…QLRVHLDIQV (97 aa)). Residues 134 to 164 (ANVAQKEKLTELQLRIRQLLDQVDQITKEQN) adopt a coiled-coil conformation. Residues 184 to 203 (VLWWSLAQTVVLVCMGFWQM) form a helical membrane-spanning segment. At 204-216 (RHLKSFFEAKKLV) the chain is on the cytoplasmic side. The Prevents secretion from ER motif lies at 213-216 (KKLV).

It belongs to the EMP24/GP25L family.

The protein localises to the endoplasmic reticulum membrane. Eca and bai are essential, though not redundant, for dorsoventral patterning of the embryo. Specifically required during early embryogenesis for the activity of maternal tkv, while the zygotic tkv is not affected. Involved in Golgi organization. The polypeptide is Transmembrane emp24 domain-containing protein eca (Drosophila willistoni (Fruit fly)).